Reading from the N-terminus, the 329-residue chain is Glucosyl-3-phosphoglycerate synthase (329 aa).

UDP-alpha-D-glucose contacts are provided by residues 55–59 (PALDE), Ser86, Lys119, and 139–141 (DSD). A Mn(2+)-binding site is contributed by Asp141. 189 to 192 (GRVT) is a binding site for (2R)-3-phosphoglycerate. Residue 234 to 237 (YGVE) participates in UDP-alpha-D-glucose binding. Mn(2+) is bound at residue His263. Asn265 lines the (2R)-3-phosphoglycerate pocket.

It belongs to the glycosyltransferase 2 family. As to quaternary structure, homodimer. Requires Mg(2+) as cofactor. It depends on Mn(2+) as a cofactor.

It catalyses the reaction an NDP-alpha-D-glucose + (2R)-3-phosphoglycerate = (2R)-2-O-(alpha-D-glucopyranosyl)-3-phospho-glycerate + a ribonucleoside 5'-diphosphate + H(+). It carries out the reaction (2R)-3-phosphoglycerate + UDP-alpha-D-glucose = (2R)-2-O-(alpha-D-glucopyranosyl)-3-phospho-glycerate + UDP + H(+). The catalysed reaction is GDP-D-glucose + (2R)-3-phosphoglycerate = (2R)-2-O-(alpha-D-glucopyranosyl)-3-phospho-glycerate + GDP + H(+). Involved in the biosynthesis of 6-O-methylglucose lipopolysaccarides (MGLPs). Catalyzes the transfer of the glucose moiety from UDP-alpha-D-glucose (UDP-Glc) to the position 2 of 3-phospho-D-glycerate (3-PGA) to form glucosyl-3-phosphoglycerate (GPG). To a lesser extent can also use GDP-Glc but not UDP-Gal or UDP-GlcNAc as the sugar donor. This Mycolicibacterium paratuberculosis (strain ATCC BAA-968 / K-10) (Mycobacterium paratuberculosis) protein is Glucosyl-3-phosphoglycerate synthase.